A 448-amino-acid chain; its full sequence is Glucose-6-phosphate isomerase (448 aa).

Catalysis depends on Glu290, which acts as the Proton donor. Catalysis depends on residues His311 and Lys425.

The protein belongs to the GPI family.

The protein localises to the cytoplasm. It carries out the reaction alpha-D-glucose 6-phosphate = beta-D-fructose 6-phosphate. It participates in carbohydrate biosynthesis; gluconeogenesis. It functions in the pathway carbohydrate degradation; glycolysis; D-glyceraldehyde 3-phosphate and glycerone phosphate from D-glucose: step 2/4. Catalyzes the reversible isomerization of glucose-6-phosphate to fructose-6-phosphate. The sequence is that of Glucose-6-phosphate isomerase from Lactococcus lactis subsp. cremoris (strain SK11).